Here is a 264-residue protein sequence, read N- to C-terminus: uncharacterized protein (264 aa).

Polar residues-rich tracts occupy residues 1–18 (MFENLNTALTPKLQSSRS), 73–83 (SLGSVGTTEVN), and 126–139 (KTTQDMLISSQPVL). Disordered regions lie at residues 1–47 (MFEN…WVGS) and 68–264 (RKEP…LSFE). The span at 149-171 (SSGQPQVSSSAQPSPADASQPEA) shows a compositional bias: low complexity. The span at 194 to 212 (LIHKDGQDDPKLKVTECRR) shows a compositional bias: basic and acidic residues. 4 positions are modified to phosphoserine: serine 214, serine 215, serine 241, and serine 250.

This is an uncharacterized protein from Bos taurus (Bovine).